The sequence spans 45 residues: MNSALFLAKLPEAYAIFKPIIDILPVIPVFFLLLAFVWQAAIGFR.

Residues 1-8 (MNSALFLA) constitute a propeptide that is removed on maturation. Residues 23–43 (ILPVIPVFFLLLAFVWQAAIG) traverse the membrane as a helical segment.

Belongs to the PsbK family. In terms of assembly, PSII is composed of 1 copy each of membrane proteins PsbA, PsbB, PsbC, PsbD, PsbE, PsbF, PsbH, PsbI, PsbJ, PsbK, PsbL, PsbM, PsbT, PsbX, PsbY, PsbZ, Psb30/Ycf12, at least 3 peripheral proteins of the oxygen-evolving complex and a large number of cofactors. It forms dimeric complexes.

It localises to the plastid. Its subcellular location is the chloroplast thylakoid membrane. One of the components of the core complex of photosystem II (PSII). PSII is a light-driven water:plastoquinone oxidoreductase that uses light energy to abstract electrons from H(2)O, generating O(2) and a proton gradient subsequently used for ATP formation. It consists of a core antenna complex that captures photons, and an electron transfer chain that converts photonic excitation into a charge separation. The protein is Photosystem II reaction center protein K of Pyropia yezoensis (Susabi-nori).